The sequence spans 215 residues: uncharacterized protein (215 aa).

A disordered region spans residues 25–48; that stretch reads LKSASPGPAPASQQASSFGSAPAQ. The segment covering 27-47 has biased composition (low complexity); it reads SASPGPAPASQQASSFGSAPA.

This is an uncharacterized protein from Homo sapiens (Human).